A 379-amino-acid polypeptide reads, in one-letter code: Flagellin A (379 aa).

Coiled coils occupy residues 103–128 (TNSA…RIAE) and 302–341 (YVDS…IKDT).

It belongs to the bacterial flagellin family. In terms of assembly, heteromer of multiple flagellin subunits including FlaA, FlaB, FlaC, FlaD and possibly FlaE.

The protein resides in the secreted. It localises to the bacterial flagellum. In terms of biological role, flagellin is the subunit protein which polymerizes to form the filaments of bacterial flagella. FlaA is essential for flagellar synthesis and full motility. Important for virulence at two different levels: is needed for crossing the fish integument and may play a role once the bacterium has entered the host. The chain is Flagellin A (flaA) from Vibrio anguillarum (Listonella anguillarum).